The sequence spans 136 residues: MRHAYRGRRFNRTAEHRKAMFANMSAALIKHEQIITTLPKAKDLRPVVEKLITLGRIDSVHTRRLAMAQLRDADMVKKLFTVLGPRYKGRPGGYCRIMKAGFRQGDNAPLAVIEFVDRDVDARGKDSGPSQVADAA.

This sequence belongs to the bacterial ribosomal protein bL17 family. As to quaternary structure, part of the 50S ribosomal subunit. Contacts protein L32.

This chain is Large ribosomal subunit protein bL17, found in Methylobacterium radiotolerans (strain ATCC 27329 / DSM 1819 / JCM 2831 / NBRC 15690 / NCIMB 10815 / 0-1).